The following is a 436-amino-acid chain: Indole-3-acetyl-aspartic acid hydrolase (436 aa).

It belongs to the peptidase M20 family. As to quaternary structure, monomer.

It catalyses the reaction (indol-3-yl)acetyl-L-aspartate + H2O = (indol-3-yl)acetate + L-aspartate. Its function is as follows. Hydrolyzes indole-3-acetyl-aspartate (IAA-Asp) to indole-3-acetic acid (IAA). Shows an exclusively high substrate specificity for IAA-Asp. This Enterobacter agglomerans (Erwinia herbicola) protein is Indole-3-acetyl-aspartic acid hydrolase.